Reading from the N-terminus, the 186-residue chain is Vacuolar protein sorting-associated protein 29 (186 aa).

Residue lysine 54 is modified to N6-acetyllysine.

Belongs to the VPS29 family. Component of the commander complex consisting of the CCC subcomplex and the retriever subcomplex. Component of the heterotrimeric retriever complex formed by VPS26C, VPS29 and VPS35L; within the complex interacts with VPS35L. Component of the heterotrimeric retromer cargo-selective complex (CSC), also described as vacuolar protein sorting subcomplex (VPS), formed by VPS26 (VPS26A or VPS26B), VPS29 and VPS35. The CSC has a highly elongated structure with VPS26 and VPS29 binding independently at opposite distal ends of VPS35 as central platform. The CSC is believed to associate with variable sorting nexins to form functionally distinct retromer complex variants. The originally described retromer complex (also called SNX-BAR retromer) is a pentamer containing the CSC and a heterodimeric membrane-deforming subcomplex formed between SNX1 or SNX2 and SNX5 or SNX6 (also called SNX-BAR subcomplex); the respective CSC and SNX-BAR subcomplexes associate with low affinity. The CSC associates with SNX3 to form a SNX3-retromer complex. The CSC associates with SNX27, the WASH complex and the SNX-BAR subcomplex to form the SNX27-retromer complex. Interacts with VPS26A, VPS35, SNX1, SNX2, SNX3, SNX27, WASHC5. Interacts with TBC1D5; this interaction is blocked by VPS35L in the retriever complex. Interacts with SNX17; the interaction is indirect; SNX17 (via its C-terminus) interacts with the retriever complex (via VPS26C and VPS35L). Interacts with VPS26B and ANKRD27.

The protein resides in the cytoplasm. Its subcellular location is the membrane. The protein localises to the endosome membrane. It is found in the early endosome. It localises to the late endosome. Component of the commander complex that is essential for endosomal recycling of transmembrane cargos; the commander complex is composed of the CCC subcomplex and the retriever subcomplex. Component of the retriever complex, which is a heterotrimeric complex related to retromer cargo-selective complex (CSC) and essential for retromer-independent retrieval and recycling of numerous cargos such as integrin alpha-5/beta-1 (ITGA5:ITGB1). Component of the retromer cargo-selective complex (CSC). The CSC is believed to be the core functional component of retromer or respective retromer complex variants acting to prevent missorting of selected transmembrane cargo proteins into the lysosomal degradation pathway. The recruitment of the CSC to the endosomal membrane involves RAB7A and SNX3. The SNX-BAR retromer mediates retrograde transport of cargo proteins from endosomes to the trans-Golgi network (TGN) and is involved in endosome-to-plasma membrane transport for cargo protein recycling. The SNX3-retromer mediates the retrograde endosome-to-TGN transport of WLS distinct from the SNX-BAR retromer pathway. The SNX27-retromer is believed to be involved in endosome-to-plasma membrane trafficking and recycling of a broad spectrum of cargo proteins. The CSC seems to act as recruitment hub for other proteins, such as the WASH complex and TBC1D5. Required to regulate transcytosis of the polymeric immunoglobulin receptor (pIgR-pIgA). In the endosomes, retriever complex drives the retrieval and recycling of NxxY-motif-containing cargo proteins by coupling to SNX17, a cargo essential for the homeostatic maintenance of numerous cell surface proteins associated with processes that include cell migration, cell adhesion, nutrient supply and cell signaling. The recruitment of the retriever complex to the endosomal membrane involves CCC and WASH complexes. Involved in GLUT1 endosome-to-plasma membrane trafficking; the function is dependent of association with ANKRD27. This chain is Vacuolar protein sorting-associated protein 29 (VPS29), found in Bos taurus (Bovine).